A 482-amino-acid chain; its full sequence is Auxin transporter-like protein 2 (482 aa).

Residues 1–58 (MVPAGDQAEEAIVADAGKEEAEVRAAMGVEQDGKFSMTSLLWHGGSVWDAWFSCASNQ) are Cytoplasmic-facing. The helical transmembrane segment at 59–76 (VAQVLLTLPYSFSQLGML) threads the bilayer. The Extracellular segment spans residues 77–78 (SG). The chain crosses the membrane as a helical span at residues 79–99 (LLLQVFYGLMGSWTAYLISVL). At 100 to 134 (YVEYRARKEKEGVSFKNHVIQWFEVLDGLLGPYWK) the chain is on the cytoplasmic side. The helical transmembrane segment at 135–155 (AAGLAFNCTFLLFGSVIQLIA) threads the bilayer. The Extracellular portion of the chain corresponds to 156 to 171 (CASNIYYINDRLDKRT). Residues 172 to 192 (WTYIFGACCSTTVFIPSFHNY) form a helical membrane-spanning segment. Arg193 is a topological domain (cytoplasmic). The helical transmembrane segment at 194-214 (IWSFLGLGMTTYTAWYLAIAA) threads the bilayer. Residues 215-231 (AVHGQVDGVTHSGPSKM) lie on the Extracellular side of the membrane. Residues 232–252 (VLYFTGATNILYTFGGHAVTV) form a helical membrane-spanning segment. Residues 253–265 (EIMHAMWKPQKFK) are Cytoplasmic-facing. A helical transmembrane segment spans residues 266 to 286 (YIYLVATLYVFTLTLPSASAM). Residues 287-313 (YWAFGDALLTHSNAFSLLPRSGWRDAA) lie on the Extracellular side of the membrane. A helical transmembrane segment spans residues 314–334 (VILMLIHQFITFGFACTPLYF). The Cytoplasmic segment spans residues 335–355 (VWEKAIGMHGTRSVLTRALAR). Residues 356 to 376 (LPIVVPIWFLAIIFPFFGPIN) form a helical membrane-spanning segment. Ser377 is a topological domain (extracellular). The helical transmembrane segment at 378–398 (AVGALLVSFTVYIIPSLSHIL) threads the bilayer. Residues 399–423 (TYRSASARLNAAEKPPPFLPSWSGM) are Cytoplasmic-facing. The helical transmembrane segment at 424-444 (FVVNVFVVAWVLVVGFGLGGW) threads the bilayer. Residues 445-482 (ASVTNFIKQIDTFGLFAKCYQCPPRAHAGAPLPAPPRH) lie on the Extracellular side of the membrane.

It belongs to the amino acid/polyamine transporter 2 family. Amino acid/auxin permease (AAAP) (TC 2.A.18.1) subfamily.

It localises to the cell membrane. Its function is as follows. Carrier protein involved in proton-driven auxin influx. May mediate the formation of auxin gradient from developing leaves (site of auxin biosynthesis) to tips. The protein is Auxin transporter-like protein 2 of Oryza sativa subsp. japonica (Rice).